Consider the following 66-residue polypeptide: Large ribosomal subunit protein bL31 (66 aa).

The Zn(2+) site is built by Cys16, Cys18, Cys36, and Cys39.

This sequence belongs to the bacterial ribosomal protein bL31 family. Type A subfamily. In terms of assembly, part of the 50S ribosomal subunit. Requires Zn(2+) as cofactor.

Functionally, binds the 23S rRNA. In Campylobacter hominis (strain ATCC BAA-381 / DSM 21671 / CCUG 45161 / LMG 19568 / NCTC 13146 / CH001A), this protein is Large ribosomal subunit protein bL31.